Reading from the N-terminus, the 572-residue chain is MASTEGANNMPKQVEVRMHDSHLSSDEPKHRNLGMRMCDKLGKNLLLSLTVFGVILGAVCGGLLRLASPIHPDVVMLIAFPGDILMRMLKMLILPLIISSLITGLSGLDAKASGRLGTRAMVYYMSTTIIAAVLGVILVLAIHPGNPKLKKQLGPGKKNDEVSSLDAFLDLIRNLFPENLVQACFQQIQTVTKKVLVAPPSEEANTTKAVISMLNETMNEAPEETKIVIKKGLEFKDGMNVLGLIGFFIAFGIAMGKMGEQAKLMVEFFNILNEIVMKLVIMIMWYSPLGIACLICGKIIAIKDLEVVARQLGMYMITVIVGLIIHGGIFLPLIYFVVTRKNPFSFFAGIFQAWITALGTASSAGTLPVTFRCLEDNLGIDKRVTRFVLPVGATINMDGTALYEAVAAIFIAQMNGVILDGGQIVTVSLTATLASIGAASIPSAGLVTMLLILTAVGLPTEDISLLVAVDWLLDRMRTSVNVVGDSFGAGIVYHLSKSELDTIDSQHRMQEDIEMTKTQSIYDDKNHRESNSNQCVYAAHNSVVIDECKVTLAANGKSADCSVEEEPWKREK.

Residues methionine 1–proline 11 show a composition bias toward polar residues. Positions methionine 1–proline 28 are disordered. The Cytoplasmic segment spans residues methionine 1–asparagine 44. Phosphoserine is present on residues serine 3, serine 21, serine 24, and serine 25. The span at valine 14–proline 28 shows a compositional bias: basic and acidic residues. Cysteine 38 is lipidated: S-palmitoyl cysteine. Helical transmembrane passes span leucine 45–leucine 64, methionine 88–leucine 108, and methionine 121–isoleucine 142. N-linked (GlcNAc...) asparagine glycans are attached at residues asparagine 205 and asparagine 215. Transmembrane regions (helical) follow at residues phenylalanine 235 to methionine 258, phenylalanine 268 to isoleucine 295, and isoleucine 317 to valine 338. The segment at residues phenylalanine 344–leucine 374 is an intramembrane region (discontinuously helical). Alanine 361–serine 363 contacts L-aspartate. A helical transmembrane segment spans residues valine 384 to phenylalanine 410. The Na(+) site is built by glycine 392, threonine 394, and asparagine 396. Residues threonine 400, isoleucine 441–glycine 445, aspartate 474, and asparagine 481 contribute to the L-aspartate site. An intramembrane region (discontinuously helical) is located at residues isoleucine 424 to glycine 457. The chain crosses the membrane as a helical span at residues tryptophan 471–valine 492. Positions 481 and 485 each coordinate Na(+). Residues serine 505, serine 520, serine 530, and serine 532 each carry the phosphoserine modification. Tyrosine 537 carries the phosphotyrosine modification. Phosphoserine is present on residues serine 542, serine 558, and serine 562.

Belongs to the dicarboxylate/amino acid:cation symporter (DAACS) (TC 2.A.23) family. SLC1A2 subfamily. As to quaternary structure, homotrimer. Interacts with AJUBA. In terms of processing, glycosylated. Post-translationally, palmitoylation at Cys-38 is not required for correct subcellular localization, but is important for glutamate uptake activity. In terms of tissue distribution, detected in brain. Detected in embryonic forebrain, especially in globus pallidus, perirhinal cortex, lateral hypothalamus, hippocampus, and on fimbria and axonal pathways connecting the neocortex, basal ganglia and thalamus (at protein level). Isoform GLT1 is expressed in the brain. Isoforms GLT-1A and GLT-1B are expressed in the liver.

The protein localises to the cell membrane. It catalyses the reaction K(+)(in) + L-glutamate(out) + 3 Na(+)(out) + H(+)(out) = K(+)(out) + L-glutamate(in) + 3 Na(+)(in) + H(+)(in). The catalysed reaction is K(+)(in) + L-aspartate(out) + 3 Na(+)(out) + H(+)(out) = K(+)(out) + L-aspartate(in) + 3 Na(+)(in) + H(+)(in). The enzyme catalyses D-aspartate(out) + K(+)(in) + 3 Na(+)(out) + H(+)(out) = D-aspartate(in) + K(+)(out) + 3 Na(+)(in) + H(+)(in). In terms of biological role, sodium-dependent, high-affinity amino acid transporter that mediates the uptake of L-glutamate and also L-aspartate and D-aspartate. Functions as a symporter that transports one amino acid molecule together with two or three Na(+) ions and one proton, in parallel with the counter-transport of one K(+) ion. Mediates Cl(-) flux that is not coupled to amino acid transport; this avoids the accumulation of negative charges due to aspartate and Na(+) symport. Essential for the rapid removal of released glutamate from the synaptic cleft, and for terminating the postsynaptic action of glutamate. This Mus musculus (Mouse) protein is Excitatory amino acid transporter 2 (Slc1a2).